The following is a 156-amino-acid chain: Pre-mRNA-splicing factor SNT309 (156 aa).

In terms of assembly, associated with the spliceosome.

It localises to the nucleus. In terms of biological role, involved in pre-mRNA splicing. The chain is Pre-mRNA-splicing factor SNT309 (SNT309) from Candida glabrata (strain ATCC 2001 / BCRC 20586 / JCM 3761 / NBRC 0622 / NRRL Y-65 / CBS 138) (Yeast).